Reading from the N-terminus, the 201-residue chain is Nucleoid occlusion factor SlmA (201 aa).

Positions 14–75 (KERQQQVLEV…ALIERIEMTL (62 aa)) constitute an HTH tetR-type domain. Positions 38 to 57 (TTERLSKAVGVSEGALYRYF) form a DNA-binding region, H-T-H motif.

It belongs to the nucleoid occlusion factor SlmA family. As to quaternary structure, homodimer. Interacts with FtsZ.

Its subcellular location is the cytoplasm. The protein resides in the nucleoid. Functionally, required for nucleoid occlusion (NO) phenomenon, which prevents Z-ring formation and cell division over the nucleoid. Acts as a DNA-associated cell division inhibitor that binds simultaneously chromosomal DNA and FtsZ, and disrupts the assembly of FtsZ polymers. SlmA-DNA-binding sequences (SBS) are dispersed on non-Ter regions of the chromosome, preventing FtsZ polymerization at these regions. In Glaesserella parasuis serovar 5 (strain SH0165) (Haemophilus parasuis), this protein is Nucleoid occlusion factor SlmA.